We begin with the raw amino-acid sequence, 277 residues long: Ribosomal RNA small subunit methyltransferase A (277 aa).

S-adenosyl-L-methionine-binding residues include Asn-18, Leu-20, Gly-45, Glu-66, Asp-89, and Asn-110.

Belongs to the class I-like SAM-binding methyltransferase superfamily. rRNA adenine N(6)-methyltransferase family. RsmA subfamily.

It is found in the cytoplasm. It carries out the reaction adenosine(1518)/adenosine(1519) in 16S rRNA + 4 S-adenosyl-L-methionine = N(6)-dimethyladenosine(1518)/N(6)-dimethyladenosine(1519) in 16S rRNA + 4 S-adenosyl-L-homocysteine + 4 H(+). Functionally, specifically dimethylates two adjacent adenosines (A1518 and A1519) in the loop of a conserved hairpin near the 3'-end of 16S rRNA in the 30S particle. May play a critical role in biogenesis of 30S subunits. The chain is Ribosomal RNA small subunit methyltransferase A from Cupriavidus taiwanensis (strain DSM 17343 / BCRC 17206 / CCUG 44338 / CIP 107171 / LMG 19424 / R1) (Ralstonia taiwanensis (strain LMG 19424)).